The primary structure comprises 634 residues: Chaperone protein HtpG (634 aa).

Residues 1–344 (MNETVANNKE…SNDLPLNVSR (344 aa)) are a; substrate-binding. Positions 345-561 (EILQDNKVTQ…DFEMGTQMAK (217 aa)) are b. Residues 562–634 (LLAAAGQAVP…TAINSLLTKG (73 aa)) form a c region.

The protein belongs to the heat shock protein 90 family. As to quaternary structure, homodimer.

It localises to the cytoplasm. Functionally, molecular chaperone. Has ATPase activity. This chain is Chaperone protein HtpG, found in Vibrio vulnificus (strain CMCP6).